The sequence spans 2621 residues: Nonribosomal peptide synthetase dtpA (2621 aa).

The adenylation 1 stretch occupies residues 446-844 (CMEQPNAEAI…GRKDQQVKIR (399 aa)). The Carrier 1 domain maps to 978–1054 (QPYTQVEETL…EVALYSRALS (77 aa)). Residue Ser-1015 is modified to O-(pantetheine 4'-phosphoryl)serine. A condensation 1 region spans residues 1095–1506 (EDIYPCTALQ…LNQLELAGPQ (412 aa)). The tract at residues 1534–1930 (SRTQPGASAI…GRRDNQVKLR (397 aa)) is adenylation 2. Positions 2071-2147 (QPSTTQEALV…LFCTNASTSI (77 aa)) constitute a Carrier 2 domain. O-(pantetheine 4'-phosphoryl)serine is present on Ser-2108. The interval 2220–2618 (AIFKLHGSKV…HSARPIASID (399 aa)) is condensation 2.

The protein belongs to the NRP synthetase family.

The protein operates within alkaloid biosynthesis. Its function is as follows. Nonribosomal peptide synthetase; part of the gene cluster that mediates the biosynthesis of the dimeric diketopiperazine alkaloid ditryptophenaline. The nonribosomal peptide synthase dtpA accepts L-tryptophan and L-phenylalanine as its substrates and forms the phenylalanyl-tryptophanyl cyclic dipeptide product cyclophenylalanyltryptophenyl. The N-methyltransferase dtpB is responsible for the N-methylation of cyclophenylalanyltryptophenyl to yield cyclo-N-methylphenylalanyltryptophenyl. The cytochrome P450 monooxygenase is responsible not only for pyrroloindole ring formation but also for concurrent dimerization of N-methylphenylalanyltryptophanyl diketopiperazine monomers into a homodimeric product. The polypeptide is Nonribosomal peptide synthetase dtpA (Aspergillus flavus (strain ATCC 200026 / FGSC A1120 / IAM 13836 / NRRL 3357 / JCM 12722 / SRRC 167)).